Consider the following 348-residue polypeptide: Killer cell immunoglobulin-like receptor 2DL1 (348 aa).

The signal sequence occupies residues 1-21 (MSLLVVSMACVGFFLLQGAWP). Over 22–245 (HEGVHRKPSL…SKTGNPRHLH (224 aa)) the chain is Extracellular. Ig-like C2-type domains are found at residues 42–107 (EETV…VTHS) and 142–205 (GENV…FHDS). A disulfide bond links C49 and C100. 4 N-linked (GlcNAc...) asparagine glycosylation sites follow: N67, N84, N144, and N178. The cysteines at positions 149 and 198 are disulfide-linked. Residues 220 to 239 (VTGNPSNSWPSPTEPSSKTG) are disordered. Residues 246–264 (ILIGTSVVIILFILLFFLL) form a helical membrane-spanning segment. Residues 265–348 (HRWCSNKKNA…ESRSKVVSCP (84 aa)) lie on the Cytoplasmic side of the membrane.

It belongs to the immunoglobulin superfamily. As to quaternary structure, interacts with ARRB2. Interacts with PTPN6; the interaction is enhanced by ARRB2. Interacts with PTPN11; the interaction is enhanced by ARRB2. Expressed by NK cells.

Its subcellular location is the cell membrane. Receptor on natural killer (NK) cells for some HLA-C alleles such as w4 and w6. Inhibits the activity of NK cells thus preventing cell lysis. The polypeptide is Killer cell immunoglobulin-like receptor 2DL1 (Homo sapiens (Human)).